The chain runs to 330 residues: Ferredoxin--NADP reductase (330 aa).

Residues Glu35, Gln43, Tyr48, Val90, Phe123, Asp285, and Thr326 each contribute to the FAD site.

The protein belongs to the ferredoxin--NADP reductase type 2 family. As to quaternary structure, homodimer. FAD serves as cofactor.

The catalysed reaction is 2 reduced [2Fe-2S]-[ferredoxin] + NADP(+) + H(+) = 2 oxidized [2Fe-2S]-[ferredoxin] + NADPH. The polypeptide is Ferredoxin--NADP reductase (Streptococcus pyogenes serotype M3 (strain ATCC BAA-595 / MGAS315)).